The following is a 110-amino-acid chain: Large ribosomal subunit protein uL22 (110 aa).

Belongs to the universal ribosomal protein uL22 family. As to quaternary structure, part of the 50S ribosomal subunit.

This protein binds specifically to 23S rRNA; its binding is stimulated by other ribosomal proteins, e.g. L4, L17, and L20. It is important during the early stages of 50S assembly. It makes multiple contacts with different domains of the 23S rRNA in the assembled 50S subunit and ribosome. Functionally, the globular domain of the protein is located near the polypeptide exit tunnel on the outside of the subunit, while an extended beta-hairpin is found that lines the wall of the exit tunnel in the center of the 70S ribosome. This chain is Large ribosomal subunit protein uL22, found in Aliarcobacter butzleri (strain RM4018) (Arcobacter butzleri).